Reading from the N-terminus, the 365-residue chain is Flagellar P-ring protein (365 aa).

Positions 1 to 19 are cleaved as a signal peptide; the sequence is MMLSLCAIAGLLLAPSIQA.

Belongs to the FlgI family. In terms of assembly, the basal body constitutes a major portion of the flagellar organelle and consists of four rings (L,P,S, and M) mounted on a central rod.

Its subcellular location is the periplasm. It localises to the bacterial flagellum basal body. Assembles around the rod to form the L-ring and probably protects the motor/basal body from shearing forces during rotation. The chain is Flagellar P-ring protein from Sodalis glossinidius (strain morsitans).